We begin with the raw amino-acid sequence, 283 residues long: Elongation factor Ts (283 aa).

Positions 82–85 are involved in Mg(2+) ion dislocation from EF-Tu; it reads TDFV.

The protein belongs to the EF-Ts family.

It is found in the cytoplasm. Associates with the EF-Tu.GDP complex and induces the exchange of GDP to GTP. It remains bound to the aminoacyl-tRNA.EF-Tu.GTP complex up to the GTP hydrolysis stage on the ribosome. In Photorhabdus laumondii subsp. laumondii (strain DSM 15139 / CIP 105565 / TT01) (Photorhabdus luminescens subsp. laumondii), this protein is Elongation factor Ts.